The chain runs to 531 residues: Maturase K (531 aa).

It belongs to the intron maturase 2 family. MatK subfamily.

It is found in the plastid. The protein resides in the chloroplast. Usually encoded in the trnK tRNA gene intron. Probably assists in splicing its own and other chloroplast group II introns. The polypeptide is Maturase K (Ephedra sinica (Chinese ephedra)).